The chain runs to 558 residues: TNF receptor-associated factor 5 (558 aa).

The RING-type zinc finger occupies 45-85 (CAFCHSVLHNPHQTGCGHRFCQQCIRSLRELNSVPICPVDK). 2 consecutive TRAF-type zinc fingers follow at residues 127–181 (DHLQ…TNLQ) and 182–239 (DHEE…GNLL). Residues 252-302 (LVLEKNYQLEQRISDLYQSLEQKESKIQQLAETVKKFEKELKQFTQMFGRN) adopt a coiled-coil conformation. Residue Lys-318 forms a Glycyl lysine isopeptide (Lys-Gly) (interchain with G-Cter in ubiquitin) linkage. Positions 340–400 (LDLRSLVDAV…EERFKQLEGA (61 aa)) form a coiled coil. The interaction with EIF2AK2/PKR stretch occupies residues 345–558 (LVDAVDSVKQ…AVDLTDLEDL (214 aa)). The MATH domain occupies 403 to 550 (SGKLIWKVTD…DDTLFLKVAV (148 aa)).

This sequence belongs to the TNF receptor-associated factor family. A subfamily. Homotrimer. Heterotrimer with TRAF3. Associates with TNFRSF5/CD40 through interaction with TRAF3. Associates with LTBR/TNFRSF3, TNFRSF4, TNFRSF8/CD30, TNFRSF11A/RANK, TNFRSF13B/TACI, TNFRSF14, TNFRSF17, TNFRSF19/TROY, RIPK2, MAP3K14, MAP3K5, and TRAF and TNF receptor associated protein TDP2. Interacts (via C-terminus) with EIF2AK2/PKR (via the kinase catalytic domain). Ubiquitinated at Lys-318 by the SCF(FBXL2) complex, leading to its degradation by the proteasome.

Its subcellular location is the cytoplasm. The protein resides in the cytosol. Its function is as follows. Adapter protein and signal transducer that links members of the tumor necrosis factor receptor family to different signaling pathways by association with the receptor cytoplasmic domain and kinases. Mediates activation of NF-kappa-B and probably JNK. Seems to be involved in apoptosis. Plays a role in mediating activation of NF-kappa-B by EIF2AK2/PKR. The sequence is that of TNF receptor-associated factor 5 (Traf5) from Mus musculus (Mouse).